Consider the following 475-residue polypeptide: UDP-N-acetylmuramate--L-alanine ligase (475 aa).

125–131 (GTHGKTT) provides a ligand contact to ATP.

Belongs to the MurCDEF family.

It is found in the cytoplasm. It catalyses the reaction UDP-N-acetyl-alpha-D-muramate + L-alanine + ATP = UDP-N-acetyl-alpha-D-muramoyl-L-alanine + ADP + phosphate + H(+). Its pathway is cell wall biogenesis; peptidoglycan biosynthesis. Functionally, cell wall formation. This chain is UDP-N-acetylmuramate--L-alanine ligase, found in Actinobacillus pleuropneumoniae serotype 5b (strain L20).